The following is a 342-amino-acid chain: Methionyl-tRNA formyltransferase (342 aa).

108–111 (SLLP) provides a ligand contact to (6S)-5,6,7,8-tetrahydrofolate.

The protein belongs to the Fmt family.

The enzyme catalyses L-methionyl-tRNA(fMet) + (6R)-10-formyltetrahydrofolate = N-formyl-L-methionyl-tRNA(fMet) + (6S)-5,6,7,8-tetrahydrofolate + H(+). In terms of biological role, attaches a formyl group to the free amino group of methionyl-tRNA(fMet). The formyl group appears to play a dual role in the initiator identity of N-formylmethionyl-tRNA by promoting its recognition by IF2 and preventing the misappropriation of this tRNA by the elongation apparatus. The sequence is that of Methionyl-tRNA formyltransferase from Prochlorococcus marinus (strain MIT 9313).